The primary structure comprises 442 residues: MPAIAVLAAAAAAWCFLQVDSRHLDALAGGAALNNANFLDNDQWLSTVSQYDRDKYWNRFRDGIQDDYFRNWNPNKPFDQALDPSKDPCLKVKCSPHKVCVTQDYQTALCVSRKHLLPRQKKGNVAHKHWLGPSNLVKCKPCPVAQSAMVCGSDGHTYTSKCKLEFHACSTGKSLNSLCDGPCPCLPEPEPLKPKAEKSACTDKELRNLASRLKDWFGALHEDANRVIKPTSSDPAQGRFDTSILPICKDSLGWMFNKLDMNYDLLLDHSEINAIYLDKYEPCIKPLFNSCDSFKDGKLSNNEWCYCFQKPAGLPCQNEMNRIQKLSKGKSLLGAFIPRCNEEGYYKATQCHGSTGQCWCVDKYGNELAGSRKQGTVSCEEEQETSGDFGSGGSVVLLDDLEDERELGPKDKEGKLRVRTRAVREDDEDEDDDKEDEVGYIW.

The N-terminal stretch at M1–S21 is a signal peptide. Disulfide bonds link C89/C100, C94/C110, C139/C169, C142/C162, C151/C183, C316/C340, C351/C358, and C360/C379. The region spanning P133 to C185 is the Kazal-like domain. The Thyroglobulin type-1 domain maps to G313–C379. 2 disordered regions span residues G375–V395 and T420–W442. S386 and S391 each carry an O-linked (Xyl...) (glycosaminoglycan) serine glycan. The segment covering E425 to W442 has biased composition (acidic residues).

Post-translationally, contains chondroitin sulfate and heparan sulfate O-linked oligosaccharides. In terms of tissue distribution, predominantly expressed in the postsynaptic area of pyramidal neurons.

The protein resides in the secreted. It is found in the extracellular space. Its subcellular location is the extracellular matrix. May play a role in cell-cell and cell-matrix interactions. May contribute to various neuronal mechanisms in the central nervous system. The polypeptide is Testican-1 (Spock1) (Mus musculus (Mouse)).